The sequence spans 295 residues: Ribosomal protein L11 methyltransferase (295 aa).

S-adenosyl-L-methionine-binding residues include Thr146, Gly167, Asp189, and Asn231.

The protein belongs to the methyltransferase superfamily. PrmA family.

The protein localises to the cytoplasm. The enzyme catalyses L-lysyl-[protein] + 3 S-adenosyl-L-methionine = N(6),N(6),N(6)-trimethyl-L-lysyl-[protein] + 3 S-adenosyl-L-homocysteine + 3 H(+). Methylates ribosomal protein L11. This Vibrio parahaemolyticus serotype O3:K6 (strain RIMD 2210633) protein is Ribosomal protein L11 methyltransferase.